Reading from the N-terminus, the 563-residue chain is NAD-dependent malic enzyme (563 aa).

The Proton donor role is filled by tyrosine 101. Residue arginine 154 participates in NAD(+) binding. The active-site Proton acceptor is lysine 172. Glutamate 243, aspartate 244, and aspartate 267 together coordinate a divalent metal cation. NAD(+)-binding residues include aspartate 267 and asparagine 416.

It belongs to the malic enzymes family. As to quaternary structure, homotetramer. The cofactor is Mg(2+). Requires Mn(2+) as cofactor.

The catalysed reaction is (S)-malate + NAD(+) = pyruvate + CO2 + NADH. The enzyme catalyses oxaloacetate + H(+) = pyruvate + CO2. This is NAD-dependent malic enzyme from Pseudomonas syringae pv. syringae (strain B728a).